Here is a 57-residue protein sequence, read N- to C-terminus: Mambalgin-3 (57 aa).

4 cysteine pairs are disulfide-bonded: Cys-3-Cys-19, Cys-12-Cys-37, Cys-41-Cys-49, and Cys-50-Cys-55.

The protein belongs to the three-finger toxin family. Short-chain subfamily. Mambalgin sub-subfamily. Expressed by the venom gland.

Its subcellular location is the secreted. This three-finger toxin inhibits ASIC channels. It acts as a gating modifier toxin by decreasing the apparent proton sensitivity of activation and by slightly increasing the apparent proton sensitivity for inactivation. It binds more tightly to the closed state and to a much lesser extent the inactivated/desensitized state of ASIC1a. It interacts directly with the outside surface of the thumb domain of chicken ASIC1a (ASIC1a), but does not insert into the acidic pocket as suggested previously. This binding leads to relocation of the thumb domain that could disrupt the acidic pocket of cASIC1a. The peptide exerts both stimulatory and inhibitory effects on ASIC1a. It reversibly inhibits rASIC1a (IC(50)=17 nM), rASIC1b (IC(50)= 44 nM) and rASIC1a-rASIC2a (IC(50)=252 nM) channels. In vivo, it shows a potent naloxone-resistant analgesic effect against acute and inflammatory pain upon central and peripheral injection. In addition, it also has an opioid-independent effect on both thermal and mechanical inflammatory pain after systemic administration and is effective against neuropathic pain. The sequence is that of Mambalgin-3 from Dendroaspis angusticeps (Eastern green mamba).